A 196-amino-acid chain; its full sequence is Elongation factor Ts (196 aa).

The involved in Mg(2+) ion dislocation from EF-Tu stretch occupies residues 80-83 (TDFV).

The protein belongs to the EF-Ts family.

It localises to the cytoplasm. Associates with the EF-Tu.GDP complex and induces the exchange of GDP to GTP. It remains bound to the aminoacyl-tRNA.EF-Tu.GTP complex up to the GTP hydrolysis stage on the ribosome. This chain is Elongation factor Ts, found in Thermus thermophilus (strain ATCC BAA-163 / DSM 7039 / HB27).